Here is a 1158-residue protein sequence, read N- to C-terminus: ATP-dependent helicase/deoxyribonuclease subunit B (1158 aa).

An ATP-binding site is contributed by 8–15 (GRAGTGKS). 4 residues coordinate [4Fe-4S] cluster: C791, C1112, C1115, and C1121.

It belongs to the helicase family. AddB/RexB type 1 subfamily. As to quaternary structure, heterodimer of AddA and AddB. Mg(2+) is required as a cofactor. Requires [4Fe-4S] cluster as cofactor.

The heterodimer acts as both an ATP-dependent DNA helicase and an ATP-dependent, dual-direction single-stranded exonuclease. Recognizes the chi site generating a DNA molecule suitable for the initiation of homologous recombination. The AddB subunit has 5' -&gt; 3' nuclease activity but not helicase activity. The chain is ATP-dependent helicase/deoxyribonuclease subunit B from Clostridium perfringens (strain ATCC 13124 / DSM 756 / JCM 1290 / NCIMB 6125 / NCTC 8237 / Type A).